A 416-amino-acid chain; its full sequence is Tyrosine--tRNA ligase (416 aa).

Y34 contributes to the L-tyrosine binding site. A 'HIGH' region motif is present at residues 39 to 48 (PTGDSLHIGH). L-tyrosine-binding residues include Y165 and Q169. The short motif at 227 to 231 (KFGKT) is the 'KMSKS' region element. K230 provides a ligand contact to ATP. The S4 RNA-binding domain maps to 349–416 (KNIVEWLVDT…KKKYFLARVK (68 aa)).

This sequence belongs to the class-I aminoacyl-tRNA synthetase family. TyrS type 1 subfamily. Homodimer.

It is found in the cytoplasm. The catalysed reaction is tRNA(Tyr) + L-tyrosine + ATP = L-tyrosyl-tRNA(Tyr) + AMP + diphosphate + H(+). In terms of biological role, catalyzes the attachment of tyrosine to tRNA(Tyr) in a two-step reaction: tyrosine is first activated by ATP to form Tyr-AMP and then transferred to the acceptor end of tRNA(Tyr). The chain is Tyrosine--tRNA ligase from Ligilactobacillus salivarius (strain UCC118) (Lactobacillus salivarius).